A 196-amino-acid chain; its full sequence is Imidazoleglycerol-phosphate dehydratase (196 aa).

Belongs to the imidazoleglycerol-phosphate dehydratase family.

It localises to the cytoplasm. The enzyme catalyses D-erythro-1-(imidazol-4-yl)glycerol 3-phosphate = 3-(imidazol-4-yl)-2-oxopropyl phosphate + H2O. Its pathway is amino-acid biosynthesis; L-histidine biosynthesis; L-histidine from 5-phospho-alpha-D-ribose 1-diphosphate: step 6/9. The chain is Imidazoleglycerol-phosphate dehydratase from Akkermansia muciniphila (strain ATCC BAA-835 / DSM 22959 / JCM 33894 / BCRC 81048 / CCUG 64013 / CIP 107961 / Muc).